Consider the following 393-residue polypeptide: S-adenosylmethionine synthase (393 aa).

Glu-9 provides a ligand contact to Mg(2+). Position 15 (His-15) interacts with ATP. Glu-43 contributes to the K(+) binding site. Residues Glu-56 and Gln-99 each contribute to the L-methionine site. Residues 167–169 (DGK), 235–238 (SGRF), Asp-246, 252–253 (RK), Ala-269, Lys-273, and Lys-277 each bind ATP. Asp-246 is a binding site for L-methionine. Lys-277 lines the L-methionine pocket.

It belongs to the AdoMet synthase family. In terms of assembly, homotetramer. Requires Mn(2+) as cofactor. Mg(2+) is required as a cofactor. It depends on Co(2+) as a cofactor. K(+) serves as cofactor.

Its subcellular location is the cytoplasm. The enzyme catalyses L-methionine + ATP + H2O = S-adenosyl-L-methionine + phosphate + diphosphate. It participates in amino-acid biosynthesis; S-adenosyl-L-methionine biosynthesis; S-adenosyl-L-methionine from L-methionine: step 1/1. In terms of biological role, catalyzes the formation of S-adenosylmethionine from methionine and ATP. The reaction comprises two steps that are both catalyzed by the same enzyme: formation of S-adenosylmethionine (AdoMet) and triphosphate, and subsequent hydrolysis of the triphosphate. The chain is S-adenosylmethionine synthase (SAMS) from Brassica rapa subsp. pekinensis (Chinese cabbage).